Here is a 306-residue protein sequence, read N- to C-terminus: MDQKDCSHFFYRPECPDINNLRALSISNRWLESDFIIEDDYQYLDCLTEDELIFYRFIFTFLSAADDLVNVNLGSLTQLFSQKDIHHYYIEQECIEVVHARVYSQIQLMLFRGDESLRVQYVNVTINNPSIQQKVQWLEEKVRDNPSVAEKYILMILIEGIFFVSSFAAIAYLRNNGLFVVTCQFNDLISRDEAIHTSASCCIYNNYVPEKPAITRIHQLFSEAVEIECAFLKSHAPKTRLVNVDAITQYVKFSADRLLSAINVPKLFNTPPPDSDFPLAFMIADKNTNFFERHSTSYAGTVINDL.

Residues Asp66, Glu96, and His99 each contribute to the Fe cation site. The active site involves Tyr103. The helical transmembrane segment at 153 to 173 (ILMILIEGIFFVSSFAAIAYL) threads the bilayer. Fe cation-binding residues include Glu159, Glu193, and His196.

Belongs to the ribonucleoside diphosphate reductase small chain family. As to quaternary structure, heterotetramer composed of a homodimer of the large subunit (R1) and a homodimer of the small subunit (R2). Larger multisubunit protein complex are also active, composed of (R1)n(R2)n. Fe cation serves as cofactor.

Its subcellular location is the host membrane. It carries out the reaction a 2'-deoxyribonucleoside 5'-diphosphate + [thioredoxin]-disulfide + H2O = a ribonucleoside 5'-diphosphate + [thioredoxin]-dithiol. Its function is as follows. Ribonucleoside-diphosphate reductase holoenzyme provides the precursors necessary for viral DNA synthesis. Allows virus growth in non-dividing cells, as well as reactivation from latency in infected hosts. Catalyzes the biosynthesis of deoxyribonucleotides from the corresponding ribonucleotides. The sequence is that of Ribonucleoside-diphosphate reductase small subunit from Varicella-zoster virus (strain Dumas) (HHV-3).